The sequence spans 504 residues: L-carnitine/gamma-butyrobetaine antiporter (504 aa).

Helical transmembrane passes span 10 to 30, 51 to 71, 92 to 112, 143 to 163, 195 to 215, 231 to 251, 263 to 283, 316 to 336, 347 to 367, 403 to 423, 446 to 466, and 475 to 495; these read IEPKVFFPPLIIVGILCWLTV, WGWAFEWYMVVMLFGWFWLVF, IFMMFASCTSAAVLFWGSIEI, GPLPWATYSFLSVAFAYFFFV, FYLVALIFAMGTSLGLATPLV, LDAIIITCWIILNAICVACGL, SYLSFLMLGWVFIVSGASFIM, WTVFYWAWWVIYAIQMSIFLA, LCFGMVMGLTASTWILWTVLG, LSTATMWGFFILCFIATVTLI, LLVRIGWSILVGIIGIVLLAL, and AIIAGGCPLFFVNIMVTLSFI.

Belongs to the BCCT transporter (TC 2.A.15) family. CaiT subfamily. Homotrimer.

Its subcellular location is the cell inner membrane. The catalysed reaction is 4-(trimethylamino)butanoate(in) + (R)-carnitine(out) = 4-(trimethylamino)butanoate(out) + (R)-carnitine(in). The protein operates within amine and polyamine metabolism; carnitine metabolism. Catalyzes the exchange of L-carnitine for gamma-butyrobetaine. This is L-carnitine/gamma-butyrobetaine antiporter from Escherichia fergusonii (strain ATCC 35469 / DSM 13698 / CCUG 18766 / IAM 14443 / JCM 21226 / LMG 7866 / NBRC 102419 / NCTC 12128 / CDC 0568-73).